The following is a 323-amino-acid chain: Calcium homeostasis modulator protein 2 (323 aa).

Residues 1 to 21 (MAALIAENFRFLSLFFKSKDV) are Cytoplasmic-facing. The interval 14–39 (LFFKSKDVMIFNGLVALGTVGSQELF) is central pore. A helical transmembrane segment spans residues 22–43 (MIFNGLVALGTVGSQELFSVVA). Residues 44-52 (FHCPCSPAR) are Extracellular-facing. Cystine bridges form between Cys46–Cys130 and Cys48–Cys162. Residues 53–76 (NYLYGLTAIGVPALALFLIGVILN) traverse the membrane as a helical segment. The Cytoplasmic segment spans residues 77 to 101 (NHTWNLVAECQYRRAKNCSAAPNFL). Residues 102-132 (LLSSILGRAAVAPVTWSVISLLRGEAYVCAL) form a helical membrane-spanning segment. At 133–179 (SEFVDPSSLTAGDKGFPPAHATEVLARFPCGEGPANLSSFREEVSRR) the chain is on the extracellular side. Positions 145–152 (DKGFPPAH) are hemichannel docking. Residues 180–206 (LKYESQLFGWLLIGVVAILVFLTKCLK) traverse the membrane as a helical segment. Residues 207–323 (HYCSPLSYRQ…DNVEMALLTA (117 aa)) lie on the Cytoplasmic side of the membrane. The segment at 214–251 (YRQEAYWAQYRTNEDQLFQRTAEVHSRVLAANNVRRFF) is intersubunit interaction.

The protein belongs to the CALHM family. As to quaternary structure, homo-undecamer. Two undecameric hemichannels can assemble in a head-to-head manner to form a gap junction. As to expression, neuron, astrocyte, and microglia.

It is found in the cell membrane. It carries out the reaction ATP(in) = ATP(out). Its activity is regulated as follows. Inhibited by divalent cations such as Co(2+) and Ni(2+). Its function is as follows. Pore-forming subunit of Ca(2+) homeostasis modulator channels. Mediates ATP release from astrocytes and ATP-induced Ca(2+) influx in microglia thus regulating neuronal ATP and Ca(2+) homeostasis, synaptic transmission and neuroinflammatory response. May form intercellular gap junctions. The gating mechanism remains unknown. This is Calcium homeostasis modulator protein 2 from Mus musculus (Mouse).